Reading from the N-terminus, the 487-residue chain is Structure-specific endonuclease subunit SLX1 (487 aa).

Positions P27–R109 constitute a GIY-YIG domain. Residues R44–W69 form a disordered region. An SLX1-type zinc finger spans residues C262–C328. Residues K359–D396 are compositionally biased toward basic and acidic residues. Disordered stretches follow at residues K359–S407 and P433–E475. A compositionally biased stretch (polar residues) spans Q397–S407. Residues K438–D455 show a composition bias toward basic and acidic residues. A compositionally biased stretch (acidic residues) spans E465–E475.

Belongs to the SLX1 family. In terms of assembly, forms a heterodimer with SLX4. The cofactor is a divalent metal cation.

It localises to the nucleus. Catalytic subunit of the SLX1-SLX4 structure-specific endonuclease that resolves DNA secondary structures generated during DNA repair and recombination. Has endonuclease activity towards branched DNA substrates, introducing single-strand cuts in duplex DNA close to junctions with ss-DNA. The sequence is that of Structure-specific endonuclease subunit SLX1 from Cryptococcus neoformans var. neoformans serotype D (strain B-3501A) (Filobasidiella neoformans).